The sequence spans 307 residues: MEFVFLGTGAGVPSKGRNVSAIALQLLEERGQTWLFDCGEATQHQILHTSVRPRRIEKIFITHLHGDHIFGLPGLLGSRSFQGGTTPLKVYGPKGIKQFIEVALSVSTTHVKYPLEVVEITEEGTVFEDNEFYVETKRLSHGIECFGYRIVEKDIQGALLVDKLLEMGVKPGPIFKRLKDGEVVELEDGTILNGNEFIGPPQKGRIITILGDTRYCEASRELAQDADVLVHEATFAAEDEQQAYDYFHSTSKQAASIALQANAKRLILTHISSRYQGDTYKELLKEARELFSNTEIATDLKSFPVEK.

His-63, His-65, Asp-67, His-68, His-141, Asp-212, and His-270 together coordinate Zn(2+). Asp-67 serves as the catalytic Proton acceptor.

It belongs to the RNase Z family. As to quaternary structure, homodimer. It depends on Zn(2+) as a cofactor.

It carries out the reaction Endonucleolytic cleavage of RNA, removing extra 3' nucleotides from tRNA precursor, generating 3' termini of tRNAs. A 3'-hydroxy group is left at the tRNA terminus and a 5'-phosphoryl group is left at the trailer molecule.. Functionally, zinc phosphodiesterase, which displays some tRNA 3'-processing endonuclease activity. Probably involved in tRNA maturation, by removing a 3'-trailer from precursor tRNA. The protein is Ribonuclease Z of Bacillus cereus (strain B4264).